The sequence spans 189 residues: dCTP deaminase (189 aa).

DCTP contacts are provided by residues 112–117, 136–138, Gln-157, Tyr-171, and Gln-181; these read KSTYAR and TLE. The active-site Proton donor/acceptor is the Glu-138.

Belongs to the dCTP deaminase family. Homotrimer.

It carries out the reaction dCTP + H2O + H(+) = dUTP + NH4(+). The protein operates within pyrimidine metabolism; dUMP biosynthesis; dUMP from dCTP (dUTP route): step 1/2. Its function is as follows. Catalyzes the deamination of dCTP to dUTP. This is dCTP deaminase from Xanthomonas euvesicatoria pv. vesicatoria (strain 85-10) (Xanthomonas campestris pv. vesicatoria).